The following is a 1063-amino-acid chain: Cobalt-zinc-cadmium resistance protein CzcA (1063 aa).

A run of 12 helical transmembrane segments spans residues 14 to 34 (WLVL…YNRL), 350 to 370 (GAVL…AALI), 371 to 391 (TATI…NYKI), 395 to 415 (LMSL…VIVE), 452 to 472 (LIFG…LTGV), 487 to 507 (ALLG…ALFI), 534 to 554 (LANT…CVAI), 883 to 903 (VVVP…FNNI), 906 to 926 (GLLV…ALWI), 937 to 957 (VGFI…LSFI), 981 to 1001 (PVLM…IATG), and 1013 to 1033 (VVIG…PVLY). The tract at residues 1040–1063 (DEDAEDTREPVTQTHQPDQGRQPA) is disordered. The segment covering 1049-1063 (PVTQTHQPDQGRQPA) has biased composition (polar residues).

The protein belongs to the resistance-nodulation-cell division (RND) (TC 2.A.6) family.

The protein resides in the cell inner membrane. Has a low cation transport activity for cobalt, it is essential for the expression of cobalt, zinc, and cadmium resistance. CzcA and CzcB together would act in zinc efflux nearly as effectively as the complete CZC efflux system (CzcABC). The polypeptide is Cobalt-zinc-cadmium resistance protein CzcA (czcA) (Cupriavidus metallidurans (strain ATCC 43123 / DSM 2839 / NBRC 102507 / CH34) (Ralstonia metallidurans)).